Here is a 392-residue protein sequence, read N- to C-terminus: Glycerophosphodiester phosphodiesterase GDPD5 (392 aa).

The first 21 residues, 1–21 (MILTRCLPLIWLSLLTVCAAG), serve as a signal peptide directing secretion. The GP-PDE domain occupies 44 to 362 (PYNIAHRGSN…DFTGSLHNFQ (319 aa)). N-linked (GlcNAc...) asparagine glycosylation is found at Asn-120, Asn-239, Asn-260, and Asn-329.

The protein belongs to the glycerophosphoryl diester phosphodiesterase family. In terms of tissue distribution, expressed in roots, rosette and cauline leaves, stems, flowers and siliques.

The protein localises to the secreted. Its subcellular location is the cell wall. It localises to the vacuole. It carries out the reaction a sn-glycero-3-phosphodiester + H2O = an alcohol + sn-glycerol 3-phosphate + H(+). This Arabidopsis thaliana (Mouse-ear cress) protein is Glycerophosphodiester phosphodiesterase GDPD5.